A 660-amino-acid polypeptide reads, in one-letter code: UvrABC system protein B (660 aa).

The region spanning 26 to 413 (AGINEGKKHQ…TPEMVEQIIR (388 aa)) is the Helicase ATP-binding domain. 39-46 (GATGTGKT) provides a ligand contact to ATP. The short motif at 92–115 (YYDYYQPEAYVPQSDTYIEKDASI) is the Beta-hairpin element. Residues 430-592 (QIDDLIGEIN…ITPKTIEKRI (163 aa)) form the Helicase C-terminal domain. The UVR domain maps to 624–659 (EAVIERMEAEMKEAAKTLNFERAAELRDLILELKAE).

Belongs to the UvrB family. In terms of assembly, forms a heterotetramer with UvrA during the search for lesions. Interacts with UvrC in an incision complex.

It is found in the cytoplasm. The UvrABC repair system catalyzes the recognition and processing of DNA lesions. A damage recognition complex composed of 2 UvrA and 2 UvrB subunits scans DNA for abnormalities. Upon binding of the UvrA(2)B(2) complex to a putative damaged site, the DNA wraps around one UvrB monomer. DNA wrap is dependent on ATP binding by UvrB and probably causes local melting of the DNA helix, facilitating insertion of UvrB beta-hairpin between the DNA strands. Then UvrB probes one DNA strand for the presence of a lesion. If a lesion is found the UvrA subunits dissociate and the UvrB-DNA preincision complex is formed. This complex is subsequently bound by UvrC and the second UvrB is released. If no lesion is found, the DNA wraps around the other UvrB subunit that will check the other stand for damage. The sequence is that of UvrABC system protein B from Halalkalibacterium halodurans (strain ATCC BAA-125 / DSM 18197 / FERM 7344 / JCM 9153 / C-125) (Bacillus halodurans).